A 1131-amino-acid chain; its full sequence is Topless-related protein 2 (1131 aa).

One can recognise a LisH domain in the interval 4-36 (LSRELVFLILQFLDEEKFKESVHKLEQESGFFF). In terms of domain architecture, CTLH spans 34–92 (FFFNIKYFEEKALAGEWDEVEKYLSGFTKVDDNRYSMKIFFEIRKQKYLEALDRNDRAK). The residue at position 214 (T214) is a Phosphothreonine. WD repeat units follow at residues 345–385 (RQGS…KVVT), 407–446 (EPSISVTRVAWSPDGNLLGVSFTKHLIHVYAYQGSDLRQH), 451–493 (AHVG…FTFE), 495–535 (HEAP…SRVD), 585–624 (FRKKSAGVVQFDTTRNRFLAVGEDNQIKFWNMDNTNLLTV), 629–668 (GGLPNLPRLRFNKDGNLLAVTTADNGFKILANTDGLRTLR), 763–802 (DSVSKVARLLYTNSGVGVLALGSNGVQRLWKWIRNEQNPT), 829–867 (NPEGSVPCIALSKNDSYVMSACGGKVSLFNMMTFKVMTT), 870–910 (PPPP…VKTK), 913–952 (GHQKHITGLAFSTALNILVSSGADAQLFFWTADSWEKKKS), 959–999 (PGKA…CIHK), and 1005–1044 (ALSSPITSASYSCNSQLVYASFADGNIAVFDAESLRLRCR). The segment at 1099-1131 (VGVAAGSDKAGTENGRPSSSSAANNSSSDQIQR) is disordered. Positions 1116–1131 (SSSSAANNSSSDQIQR) are enriched in low complexity.

As to quaternary structure, tetramer. Interacts with NINJA/AFPH2. Interacts with SMXL6, SMXL7 and SMXL8. Interacts with SPL (via EAR motif). Interacts with SPEAR3/TIE1.

The protein localises to the nucleus. Functionally, transcriptional corepressor. Negative regulator of jasmonate responses. This Arabidopsis thaliana (Mouse-ear cress) protein is Topless-related protein 2 (TPR2).